A 324-amino-acid polypeptide reads, in one-letter code: Acetyl-coenzyme A carboxylase carboxyl transferase subunit alpha (324 aa).

The 255-residue stretch at 44–298 folds into the CoA carboxyltransferase C-terminal domain; it reads RFQNQLVKLQ…KKELTEQLDS (255 aa).

The protein belongs to the AccA family. Acetyl-CoA carboxylase is a heterohexamer composed of biotin carboxyl carrier protein (accB), biotin carboxylase (accC) and two subunits each of ACCase subunit alpha (accA) and ACCase subunit beta (accD).

The protein localises to the plastid. It localises to the chloroplast. The enzyme catalyses N(6)-carboxybiotinyl-L-lysyl-[protein] + acetyl-CoA = N(6)-biotinyl-L-lysyl-[protein] + malonyl-CoA. It functions in the pathway lipid metabolism; malonyl-CoA biosynthesis; malonyl-CoA from acetyl-CoA: step 1/1. Functionally, component of the acetyl coenzyme A carboxylase (ACC) complex. First, biotin carboxylase catalyzes the carboxylation of biotin on its carrier protein (BCCP) and then the CO(2) group is transferred by the carboxyltransferase to acetyl-CoA to form malonyl-CoA. This Pyropia yezoensis (Susabi-nori) protein is Acetyl-coenzyme A carboxylase carboxyl transferase subunit alpha.